The chain runs to 589 residues: MADPVYVGGFLVRYDEPPGEAELFLPSGVVDRWLRDCRGPLPLNVNHDESATVGYVAGLQNVRAGLFCLGRVTSPKFLDIVQKASEKSELVSRGPPSESSLRPDGVLEFLSGSYSGLSLSSRRDINAADGAAGDAETACFKHVALCSVGRRRGTLAVYGRQPDWVMERFPDLTEADREALRNQLSGSGEVAAKESAESSAAAAVDPFQSDSYGLLGNSVDALYIQERLPKLRYDKRLVGVTARESYVKASVSPAEQETCDIKVEKERPKEPEQSHVPTESMSHPMSAVATPAASTVAPSQAPLALAHDGVYLPKDAFFSLIGASRPLAEAAGARAAYPAVPPPPAYPVMNYEDPSSRHFDYSAWLRRPAYDAVPPLPPPPVMPMPYRRRDPMMEEAERAAWERGYAPSAYDHYVNNGSWSRSRSGALKRRRERDASSDEEEDMSFPGEADHGKARKRLKAHHGRDNNNSGSDAKGDRYDDIREALQELKREMLAVRQIAPAALLAPAQLATPVASPTTTTSHQAEASEPQASTAAAAPSTASSHGSKSAERGVVNASCRVAPPLEAVNPPKDMVDLNRRLFVAALNKME.

Active-site charge relay system residues include His47, Ser118, and His142. Over residues 264–273 (EKERPKEPEQ) the composition is skewed to basic and acidic residues. The segment at 264–283 (EKERPKEPEQSHVPTESMSH) is disordered. Residues 307 to 326 (HDGVYLPKDAFFSLIGASRP) form an interaction with pAP region. 2 disordered regions span residues 421–478 (RSRS…GDRY) and 514–552 (ASPT…AERG). 2 short sequence motifs (nuclear localization signal) span residues 428–433 (KRRRER) and 453–459 (KARKRLK). A compositionally biased stretch (basic residues) spans 453-462 (KARKRLKAHH). Positions 514–543 (ASPTTTTSHQAEASEPQASTAAAAPSTASS) are enriched in low complexity. An interaction with major capsid protein region spans residues 569-589 (PPKDMVDLNRRLFVAALNKME).

It belongs to the herpesviridae capsid scaffolding protein family. Homomultimer. Interacts with major capsid protein. As to quaternary structure, exists in a monomer-dimer equilibrium with the dimer being the active species. Post-translationally, capsid scaffolding protein is cleaved by assemblin after formation of the spherical procapsid. As a result, the capsid obtains its mature, icosahedral shape. Cleavages occur at two or more sites: release (R-site) and maturation (M-site).

It is found in the host cytoplasm. The protein localises to the host nucleus. The catalysed reaction is Cleaves -Ala-|-Ser- and -Ala-|-Ala- bonds in the scaffold protein.. In terms of biological role, acts as a scaffold protein by binding major capsid protein in the cytoplasm, inducing the nuclear localization of both proteins. Multimerizes in the nucleus such as major capsid protein forms the icosahedral T=16 capsid. Autocatalytic cleavage releases the assembly protein, and subsequently abolishes interaction with major capsid protein. Cleavages products are evicted from the capsid before or during DNA packaging. Protease that plays an essential role in virion assembly within the nucleus. Catalyzes the cleavage of the assembly protein after formation of the spherical procapsid. By that cleavage, the capsid matures and gains its icosahedral shape. The cleavage sites seem to include -Ala-Ser-, -Ala-Ala-, as well as Ala-Thr bonds. Assemblin and cleavages products are evicted from the capsid before or during DNA packaging. Functionally, plays a major role in capsid assembly. Acts as a scaffold protein by binding major capsid protein. Multimerizes in the nucleus such as major capsid protein forms the icosahedral T=16 capsid. Cleaved by assemblin after capsid completion. The cleavages products are evicted from the capsid before or during DNA packaging. The polypeptide is Capsid scaffolding protein (UL80) (Simian cytomegalovirus (strain Colburn)).